We begin with the raw amino-acid sequence, 289 residues long: Nodulation protein NolT (289 aa).

Residues 1-33 form the signal peptide; sequence MFGSAHGDTTSSDTSGRRPLRLVVLPLLLALSS. Cys34 carries the N-palmitoyl cysteine lipid modification. Cys34 carries the S-diacylglycerol cysteine lipid modification. The helical transmembrane segment at 233 to 253 threads the bilayer; the sequence is VAVGVSAAVFAVTCYLLFIVL.

The protein belongs to the YscJ lipoprotein family.

The protein localises to the cell outer membrane. In Sinorhizobium fredii (strain NBRC 101917 / NGR234), this protein is Nodulation protein NolT (nolT).